A 70-amino-acid chain; its full sequence is MKFLVNVALVFMVVYISFIYAAPEPEPAPEAEAEADAEADPEAGIGAVLKVLTTGLPALISWIKRKRQQG.

The first 21 residues, 1–21 (MKFLVNVALVFMVVYISFIYA), serve as a signal peptide directing secretion. Positions 22–43 (APEPEPAPEAEAEADAEADPEA) are cleaved as a propeptide — removed by a dipeptidylpeptidase. N-formylglycine; partial is present on Gly44. The residue at position 69 (Gln69) is a Glutamine amide.

This sequence belongs to the melittin family. In terms of assembly, monomer (in solution and for integration into membranes), homotetramer (in solution and potentially as a toroidal pore in membranes), and potenially homomultimer (as a toroidal pore in membranes). In terms of tissue distribution, expressed by the venom gland.

The protein localises to the secreted. It localises to the target cell membrane. In terms of biological role, main toxin of bee venom with strong hemolytic activity and antimicrobial activity. It has enhancing effects on bee venom phospholipase A2 activity. This amphipathic toxin binds to negatively charged membrane surface and forms pore by inserting into lipid bilayers inducing the leakage of ions and molecules and the enhancement of permeability that ultimately leads to cell lysis. It acts as a voltage-gated pore with higher selectivity for anions over cations. The ion conductance has been shown to be voltage-dependent. Self-association of melittin in membranes is promoted by high ionic strength, but not by the presence of negatively charged lipids. In vivo, intradermal injection into healthy human volunteers produce sharp pain sensation and an inflammatory response. It produces pain by activating primary nociceptor cells directly and indirectly due to its ability to activate plasma membrane phospholipase A2 and its pore-forming activity. The protein is Melittin (MELT) of Apis cerana cerana (Oriental honeybee).